The sequence spans 146 residues: Flavodoxin (146 aa).

A Flavodoxin-like domain is found at 4–143 (ALIVYGSTTG…EVLDWAREVL (140 aa)).

It belongs to the flavodoxin family. Requires FMN as cofactor.

In terms of biological role, electron-transfer proteins that function in various electron transport systems in microorganisms. Functionally interchangeable with ferredoxin. The protein is Flavodoxin of Megalodesulfovibrio gigas (strain ATCC 19364 / DSM 1382 / NCIMB 9332 / VKM B-1759) (Desulfovibrio gigas).